Consider the following 207-residue polypeptide: Ras-related protein Rab-8A (207 aa).

Serine 17, glycine 18, valine 19, glycine 20, lysine 21, threonine 22, cysteine 23, serine 39, and threonine 40 together coordinate GTP. Mg(2+) is bound at residue threonine 22. 2 consecutive short sequence motifs (switch) follow at residues 31–45 and 63–80; these read DAFNATFISTIGIDF and DTAGQERFRTITTAYYRG. Residues threonine 40 and aspartate 63 each contribute to the Mg(2+) site. Glycine 66, asparagine 121, lysine 122, aspartate 124, alanine 152, and lysine 153 together coordinate GTP. Cysteine methyl ester is present on cysteine 204. Residue cysteine 204 is the site of S-geranylgeranyl cysteine attachment. Positions 205–207 are cleaved as a propeptide — removed in mature form; the sequence is VLL.

The protein belongs to the small GTPase superfamily. Rab family. The cofactor is Mg(2+).

It is found in the cell membrane. The protein localises to the golgi apparatus. Its subcellular location is the endosome membrane. The protein resides in the recycling endosome membrane. It localises to the cell projection. It is found in the cilium. The protein localises to the cytoplasmic vesicle. Its subcellular location is the phagosome membrane. The protein resides in the cytoplasm. It localises to the cytoskeleton. It is found in the microtubule organizing center. The protein localises to the centrosome. Its subcellular location is the centriole. The protein resides in the cilium basal body. It localises to the midbody. The catalysed reaction is GTP + H2O = GDP + phosphate + H(+). With respect to regulation, regulated by guanine nucleotide exchange factors (GEFs) which promote the exchange of bound GDP for free GTP, GTPase activating proteins (GAPs) which increase the GTP hydrolysis activity, and GDP dissociation inhibitors (GDIs) which inhibit the dissociation of the nucleotide from the GTPase. Activated in response to insulin. The small GTPases Rab are key regulators of intracellular membrane trafficking, from the formation of transport vesicles to their fusion with membranes. Rabs cycle between an inactive GDP-bound form and an active GTP-bound form that is able to recruit to membranes different sets of downstream effectors directly responsible for vesicle formation, movement, tethering and fusion. RAB8A is involved in polarized vesicular trafficking and neurotransmitter release. Together with RAB11A, RAB3IP, the exocyst complex, PARD3, PRKCI, ANXA2, CDC42 and DNMBP promotes transcytosis of PODXL to the apical membrane initiation sites (AMIS), apical surface formation and lumenogenesis. Regulates the compacted morphology of the Golgi. Together with MYO5B and RAB11A participates in epithelial cell polarization. Also involved in membrane trafficking to the cilium and ciliogenesis. Together with MICALL2, may also regulate adherens junction assembly. May play a role in insulin-induced transport to the plasma membrane of the glucose transporter GLUT4 and therefore play a role in glucose homeostasis. Involved in autophagy. Participates in the export of a subset of neosynthesized proteins through a Rab8-Rab10-Rab11-dependent endososomal export route. Targeted to and stabilized on stressed lysosomes through LRRK2 phosphorylation. Suppresses stress-induced lysosomal enlargement through EHBP1 and EHNP1L1 effector proteins. In Gallus gallus (Chicken), this protein is Ras-related protein Rab-8A (RAB8A).